The following is a 606-amino-acid chain: Ubiquitin carboxyl-terminal hydrolase 2 (606 aa).

Residues 1 to 201 form a necessary for interaction with MDM4 region; it reads MSQLSSTLKR…RSEYLADYLE (201 aa). Disordered regions lie at residues 53–112 and 207–228; these read PSPP…GGSG and ASAP…LSPT. A compositionally biased stretch (basic and acidic residues) spans 90-100; sequence KRAESQTRGTE. The USP domain maps to 268 to 600; sequence AGLRNLGNTC…DAYLLFYELA (333 aa). C277 serves as the catalytic Nucleophile. Positions 404–504 are necessary for interaction with MDM4; it reads YLEREDSRIG…FPKILVLHLK (101 aa). Zn(2+) contacts are provided by C426, C429, C477, and C480. Catalysis depends on H558, which acts as the Proton acceptor.

It belongs to the peptidase C19 family. USP2 subfamily. In terms of assembly, homooligomer. Found in trimeric complex with MDM2 and MDM4 and USP2. Interacts with CCND1; the interaction is direct and promotes its stabilization by antagonizing ubiquitin-dependent degradation. Interacts (via N-terminus and C-terminus) with MDM2. Interacts with MDM4 and PER1. Interacts with KCNQ1; counteracts the NEDD4L-specific down-regulation of I(Ks) and restores plasma membrane localization of KCNQ1.

Its subcellular location is the cytoplasm. The protein resides in the perinuclear region. The enzyme catalyses Thiol-dependent hydrolysis of ester, thioester, amide, peptide and isopeptide bonds formed by the C-terminal Gly of ubiquitin (a 76-residue protein attached to proteins as an intracellular targeting signal).. Its activity is regulated as follows. Cleavage is inhibited by ubiquitin in a dosage-dependent manner. Cleavage is blocked by ubiquitin aldehyde. Its function is as follows. Hydrolase that deubiquitinates polyubiquitinated target proteins such as MDM2, MDM4 and CCND1. Possesses both ubiquitin-specific peptidase and isopeptidase activities. Deubiquitinates MDM2 without reversing MDM2-mediated p53/TP53 ubiquitination and thus indirectly promotes p53/TP53 degradation and limits p53 activity. Has no deubiquitinase activity against p53/TP53. Prevents MDM2-mediated degradation of MDM4. Plays a role in the G1/S cell-cycle progression in normal and cancer cells. Plays a role in the regulation of myogenic differentiation of embryonic muscle cells. Regulates the circadian clock by modulating its intrinsic circadian rhythm and its capacity to respond to external cues. Associates with clock proteins and deubiquitinates core clock component PER1 but does not affect its overall stability. Regulates the nucleocytoplasmic shuttling and nuclear retention of PER1 and its repressive role on the clock transcription factors CLOCK and BMAL1. The polypeptide is Ubiquitin carboxyl-terminal hydrolase 2 (USP2) (Bos taurus (Bovine)).